We begin with the raw amino-acid sequence, 116 residues long: Protein SPIRAL1-like 1 (116 aa).

The span at 1–12 shows a compositional bias: gly residues; it reads MSRGGSAGGGQS. The interval 1-116 is disordered; it reads MSRGGSAGGG…SSLGYLFGGN (116 aa). The segment covering 27–43 has biased composition (pro residues); it reads AAKPAPAAAPAPAPAPA. Residues 44-60 show a composition bias toward low complexity; the sequence is PAAAVAAPAEKPSPAKA. The segment covering 72–90 has biased composition (polar residues); it reads GSRSNNNYHRADGQNTGNF. Gly residues predominate over residues 103–116; it reads PGGGSSLGYLFGGN.

It belongs to the SPIRAL1 family.

Its function is as follows. Acts in maintaining the cortical microtubules organization essential for anisotropic cell growth. The sequence is that of Protein SPIRAL1-like 1 from Oryza sativa subsp. japonica (Rice).